Consider the following 487-residue polypeptide: Sugar transporter ERD6-like 6 (487 aa).

The residue at position 2 (Ser-2) is an N-acetylserine. 12 helical membrane-spanning segments follow: residues 46-66, 89-109, 115-135, 146-166, 178-198, 201-221, 284-304, 320-340, 347-367, 389-409, 425-445, and 451-471; these read ISVL…GFTC, VFGS…GQIA, KGSL…ISFA, LLEG…IAEI, VNQL…LFVP, ILAV…FFIP, LMVG…GVLF, AATF…TWLV, LLLT…AAAF, VGVV…PWLI, IATL…NLLL, and GTFT…TLWV.

This sequence belongs to the major facilitator superfamily. Sugar transporter (TC 2.A.1.1) family.

It localises to the membrane. In terms of biological role, sugar transporter. The polypeptide is Sugar transporter ERD6-like 6 (Arabidopsis thaliana (Mouse-ear cress)).